Here is a 148-residue protein sequence, read N- to C-terminus: MARSLGVPLLLLAALVVALALAVSPAAGARTRQSPRLLGGLEDVDAQEKDVQRALGFAESEYNKGSNDRYHSRALQVVRARRQIVSGVKYYLDVLIGRTTCTKTQTNLANCPFHDQPDLQRKMLCSFEIYSVPWLNKISLLKSDCQNA.

Positions 1-28 are cleaved as a signal peptide; it reads MARSLGVPLLLLAALVVALALAVSPAAG. Positions 83 to 87 match the Secondary area of contact motif; it reads QIVSG. 2 disulfide bridges follow: cysteine 101–cysteine 111 and cysteine 125–cysteine 145.

It belongs to the cystatin family.

It localises to the secreted. This is a thiol proteinase inhibitor. The sequence is that of Cystatin-C (CST3) from Oryctolagus cuniculus (Rabbit).